The following is a 349-amino-acid chain: MDIKNLSLKDIKFPKSWETKPSKIEYMQFVYQEAIDMKVWRKDNEIDILTHHHVTDLSRFFWPNADFEGLVLGAELMVWFFAFDDLFDGGFIDDNENEQYRLVNRMNKVFLEGTIEDDSTGAERMGYYLRNKVRAICGEKRQSTFHRFNSSCVQWVDSIIPFIKLKRNQKSLDFNLYIHHRKFNIGAIPCFLVSEIILDPMSNIECFIWLDSRWIKMSEIICEIIALVNDCVSYEKEIKENGAPLNSLKFIQIEKNLNLQESFEYISNYLNELINQYIELETSFIKSYKPITSNYNSNFIAIVEHLHNMSFANVSWSTQTPRYLSQTQPFLELRRNKKIITKIYDLKNK.

The DDxx(x)D/E motif signature appears at 84 to 89 (DDLFDG). The short motif at 229–237 (NDCVSYEKE) is the NDxxSxxxD/E motif element.

This sequence belongs to the terpene synthase family.

It carries out the reaction (2E,6E)-farnesyl diphosphate = (3S)-(+)-asterisca-2(9),6-diene + diphosphate. The enzyme catalyses (2E)-geranyl diphosphate = (Z)-beta-ocimene + diphosphate. The catalysed reaction is (2E)-geranyl diphosphate + H2O = linalool + diphosphate. Functionally, terpene synthase that converts its substrate farnesyl diphosphate (FPP) into the sesquiterpene (3S)-(+)-asterisca-2(9),6-diene. Is also able to convert geranyl diphosphate (GPP) into a mixture of monoterpenes including (Z)-beta-ocimene, allo-ocimene and linalool. The polypeptide is Terpene synthase 2 (Dictyostelium discoideum (Social amoeba)).